Here is a 78-residue protein sequence, read N- to C-terminus: MCGYYGNYYGGRGYGCCGCGGLGYGYGGLGCGYGSYYGCGYRGLGCGYGYGCGYGSRSLYGCGYGCGSGYGSGFGYYY.

The tract at residues 3–76 is 25 X 2 AA repeats of G-[YCGS]; it reads GYYGNYYGGR…GSGYGSGFGY (74 aa).

Belongs to the KRTAP type 6 family. In terms of assembly, interacts with hair keratins. As to expression, strong expression in narrowly defined pattern restricted to the lower and middle cortical regions of the hair shaft in both developing and cycling hair. During hair follicle regression (catagen), expression levels decrease until expression is no longer detectable in follicles at resting stage (telogen).

In the hair cortex, hair keratin intermediate filaments are embedded in an interfilamentous matrix, consisting of hair keratin-associated proteins (KRTAP), which are essential for the formation of a rigid and resistant hair shaft through their extensive disulfide bond cross-linking with abundant cysteine residues of hair keratins. The matrix proteins include the high-sulfur and high-glycine-tyrosine keratins. The polypeptide is Keratin-associated protein 6-5 (Krtap6-5) (Mus musculus (Mouse)).